The primary structure comprises 145 residues: Spore coat protein YeeK (145 aa).

PG repeat units lie at residues Gly-9–His-15, Gly-22–Met-28, Gly-32–Met-38, and Gly-41–Met-47. GGY repeat units lie at residues Gly-57–Pro-63, Gly-66–Pro-72, and Gly-74–Pro-80. H4 repeat units follow at residues Tyr-99–Gly-105, His-111–Gly-117, His-121–Gly-127, and His-131–Gly-137. Residues His-100–His-138 are compositionally biased toward basic residues. The interval His-100 to Lys-145 is disordered.

Its subcellular location is the spore coat. Functionally, part of the spore coat. This chain is Spore coat protein YeeK (yeeK), found in Bacillus subtilis (strain 168).